The primary structure comprises 415 residues: ATP-dependent RNA helicase RhlB (415 aa).

Positions 9–37 match the Q motif motif; sequence QRFSALPLHPIVRGALAKKGFDFCTPIQA. In terms of domain architecture, Helicase ATP-binding spans 40–218; it reads LPISLNGRDV…FEDMNEPEYI (179 aa). 53-60 is an ATP binding site; the sequence is AQTGTGKT. Residues 164–167 carry the DEAD box motif; sequence DEAD. The region spanning 241 to 389 is the Helicase C-terminal domain; that stretch reads DKMALLLTLM…VSQYETEALL (149 aa).

Belongs to the DEAD box helicase family. RhlB subfamily. As to quaternary structure, component of the RNA degradosome, which is a multiprotein complex involved in RNA processing and mRNA degradation.

Its subcellular location is the cytoplasm. It catalyses the reaction ATP + H2O = ADP + phosphate + H(+). Its function is as follows. DEAD-box RNA helicase involved in RNA degradation. Has RNA-dependent ATPase activity and unwinds double-stranded RNA. The chain is ATP-dependent RNA helicase RhlB from Haemophilus influenzae (strain ATCC 51907 / DSM 11121 / KW20 / Rd).